The chain runs to 296 residues: MKFQDMILSLNQFWGEQGCIIAQPYDMEKGAGTFNPNTFLRALGPEPWKVAYIEPSRRPTDGRYGENPNRLQHYFQYQVIIKPSPDNIQELYLQSLERLGVNPKEHDIRFVEDNWESPTLGAWGLGWEVWLDGMEVTQFTYFQQCGGIDCKPVCAEITYGLERLAMYIQNKESVYDIEYVGDITYGDIYLQNEIDYSYYNFRAADVEALQAWFEMYEKEAIRIAEKGLVLPAYDYVLKCSHTFNLLDARGAISVTERTGYIARVRNLARLCAQAYVEQRERLGYPLLKEQSGKEAE.

Belongs to the class-II aminoacyl-tRNA synthetase family. As to quaternary structure, tetramer of two alpha and two beta subunits.

Its subcellular location is the cytoplasm. It catalyses the reaction tRNA(Gly) + glycine + ATP = glycyl-tRNA(Gly) + AMP + diphosphate. The chain is Glycine--tRNA ligase alpha subunit from Desulfitobacterium hafniense (strain Y51).